The chain runs to 511 residues: Cytochrome P450 4B1 (511 aa).

Positions 315 and 453 each coordinate heme.

It belongs to the cytochrome P450 family. It depends on heme as a cofactor.

The protein localises to the endoplasmic reticulum membrane. It localises to the microsome membrane. The catalysed reaction is an organic molecule + reduced [NADPH--hemoprotein reductase] + O2 = an alcohol + oxidized [NADPH--hemoprotein reductase] + H2O + H(+). Its function is as follows. Cytochromes P450 are a group of heme-thiolate monooxygenases. In liver microsomes, this enzyme is involved in an NADPH-dependent electron transport pathway. It oxidizes a variety of structurally unrelated compounds, including steroids, fatty acids, and xenobiotics. This is Cytochrome P450 4B1 (Cyp4b1) from Rattus norvegicus (Rat).